The primary structure comprises 543 residues: Terpineol synthase, chloroplastic (543 aa).

The tract at residues 1–22 (MNTEPSPNHYSAISSSDQNLTR) is disordered. Residues arginine 263, aspartate 300, aspartate 304, arginine 435, and asparagine 438 each coordinate (2E)-geranyl diphosphate. Residues aspartate 300 and aspartate 304 each coordinate Mg(2+). The short motif at 300–304 (DDVYD) is the DDXXD motif element. Residues asparagine 438, threonine 442, and glutamate 446 each coordinate Mg(2+).

The protein belongs to the terpene synthase family. Tpsb subfamily. In terms of assembly, monomer. The cofactor is Mg(2+). Mn(2+) serves as cofactor. As to expression, confined to flowers.

It localises to the plastid. It is found in the chloroplast. The enzyme catalyses (2E)-geranyl diphosphate + H2O = (S)-alpha-terpineol + diphosphate. It catalyses the reaction (2E)-geranyl diphosphate = sabinene + diphosphate. It carries out the reaction (2E)-geranyl diphosphate = beta-myrcene + diphosphate. The catalysed reaction is (2E)-geranyl diphosphate = limonene + diphosphate. The enzyme catalyses (2E)-geranyl diphosphate + H2O = 1,8-cineole + diphosphate. Its pathway is secondary metabolite biosynthesis; terpenoid biosynthesis. Monoterpene synthase (TPS) involved in the biosynthesis of monoterpene natural products of the 'cineole cassette', volatile compounds present in floral scent. Catalyzes the conversion of (2E)-geranyl diphosphate (GPP) into alpha-terpineol and, as minor products, sabinene, beta-myrcene, limonene and 1,8-cineole. This is Terpineol synthase, chloroplastic from Nicotiana alata (Winged tobacco).